The primary structure comprises 113 residues: Ribulose bisphosphate carboxylase small subunit (113 aa).

The protein belongs to the RuBisCO small chain family. Heterohexadecamer of 8 large and 8 small subunits. Forms a CsoS2-CsoS1-RuBisCO complex.

Its subcellular location is the carboxysome. In terms of biological role, ruBisCO catalyzes two reactions: the carboxylation of D-ribulose 1,5-bisphosphate, the primary event in carbon dioxide fixation, as well as the oxidative fragmentation of the pentose substrate in the photorespiration process. Both reactions occur simultaneously and in competition at the same active site. Although the small subunit is not catalytic it is essential for maximal activity. This is Ribulose bisphosphate carboxylase small subunit from Prochlorococcus marinus (strain MIT 9313).